The chain runs to 298 residues: Iron-regulated virulence regulatory protein IrgB (298 aa).

Residues 1–59 enclose the HTH lysR-type domain; that stretch reads MQDLSAVKAFHALCQHKSLTAAAKALEQPKSTLSRRLAQLEEDLGQSLLMRQGNRLTLT. The H-T-H motif DNA-binding region spans 19–38; it reads LTAAAKALEQPKSTLSRRLA.

The protein belongs to the LysR transcriptional regulatory family.

Its function is as follows. Transcription activation of the irgA gene. In the presence of sufficient iron, transcription of both irgA and irgB is negatively regulated by a fur-like protein. In low iron conditions, negative regulation of transcription is removed, and production of IrgB leads to positive transcriptional activation of irgA. The polypeptide is Iron-regulated virulence regulatory protein IrgB (irgB) (Vibrio cholerae serotype O1 (strain ATCC 39541 / Classical Ogawa 395 / O395)).